We begin with the raw amino-acid sequence, 396 residues long: NADH-quinone oxidoreductase subunit D (396 aa).

Belongs to the complex I 49 kDa subunit family. In terms of assembly, NDH-1 is composed of 14 different subunits. Subunits NuoB, C, D, E, F, and G constitute the peripheral sector of the complex.

The protein localises to the cell inner membrane. The catalysed reaction is a quinone + NADH + 5 H(+)(in) = a quinol + NAD(+) + 4 H(+)(out). NDH-1 shuttles electrons from NADH, via FMN and iron-sulfur (Fe-S) centers, to quinones in the respiratory chain. The immediate electron acceptor for the enzyme in this species is believed to be ubiquinone. Couples the redox reaction to proton translocation (for every two electrons transferred, four hydrogen ions are translocated across the cytoplasmic membrane), and thus conserves the redox energy in a proton gradient. The protein is NADH-quinone oxidoreductase subunit D of Bartonella bacilliformis (strain ATCC 35685 / KC583 / Herrer 020/F12,63).